Reading from the N-terminus, the 353-residue chain is Inactive metacaspase-4 (353 aa).

Residue Gly2 is the site of N-myristoyl glycine attachment.

The protein belongs to the peptidase C14B family. Palmitoylated. In terms of processing, proteolytic cleavage by MCA3 occurs prior or during secretion and requires MCA4 membrane localization. Cleavage is dispensable for secretion and parasite growth and virulence in the mammalian host. In vitro, can be cleaved by MCA2 but specifically cleaved by MCA3 in vivo.

It localises to the cell projection. The protein localises to the cilium. The protein resides in the flagellum membrane. Its subcellular location is the secreted. Its function is as follows. Inactive metacaspase which plays a role in parasite bloodstream form growth and in parasite virulence within the mammalian host. In Trypanosoma brucei brucei, this protein is Inactive metacaspase-4.